A 183-amino-acid polypeptide reads, in one-letter code: DELTA-miturgitoxin-Cp1a (183 aa).

The N-terminal stretch at 1-20 (MKFSLFFSVFFLAVLHACLS) is a signal peptide. A propeptide spanning residues 21-47 (ESEIDLEDEEHFMSSDSFLSEIQDESR) is cleaved from the precursor. The Processing quadruplet motif motif lies at 44 to 47 (DESR). 8 disulfide bridges follow: Cys-51/Cys-66, Cys-58/Cys-75, Cys-65/Cys-88, Cys-77/Cys-86, Cys-115/Cys-130, Cys-122/Cys-139, Cys-129/Cys-157, and Cys-141/Cys-155. Domain repeat units lie at residues 51 to 77 (CIER…KCTC) and 115 to 141 (CVPK…QCKC). Positions 51–141 (CIERNKECTN…GGIFKYQCKC (91 aa)) are 2 X approximate repeats with cysteine pattern C-C-CC-C-C. The interval 164 to 177 (QAIEGALRIAKKLI) is predicted alpha-helix. A Tryptophan amide modification is found at Trp-181.

The protein belongs to the neurotoxin 19 (CSTX) family. Double-CSTX subfamily. Post-translationally, cleavage of the propeptide depends on the processing quadruplet motif (XXXR, with at least one of X being E). Expressed by the venom gland.

It is found in the secreted. Its subcellular location is the target cell membrane. Functionally, spider venom toxin that exhibits cytolytic activity by forming an alpha-helix across the membrane. Lethal to insect larvae. Causes instant paralysis and death in the larvae of the flesh fly (S.carnaria) at doses of 20 ug/g, at doses of less than 10 ug/g causes reversible paralysis. Has cytolytic activity against insect Sf9 cells. Causes stable and irreversible depolarization of fly muscle fibers, leading to contracture at higher toxin concentrations. Destabilizes membranes. The chain is DELTA-miturgitoxin-Cp1a from Cheiracanthium punctorium (Yellow sac spider).